Consider the following 346-residue polypeptide: MAVNSAAIRWLGDHLQLLDQRCLPTETLWLDICDSQQAADAIRNMVVRGAPAIGITAAYGLALEAQIMGNDASWVTLQNAVATLADSRPTAVNLFWALERLQRYAGDLQGKALAQALAEDAEAIHREDLAANQAMGEFGADLLPSGATVYTHCNTGALATGGHGTALGIIRSAWARNQLTGVFAGETRPWLQGSRLTSWELLNDGIPVTLVADSCAGQLMQQGKIQAVIVGADRITANGDTANKIGTYNLAVLAQHHNIPFIVAAPVSTLDPALPNGSHIVIEERDANEVRNVQGKSLAPEHCPVYNPAFDITPAQLITAIVTERGVVHRPDTAKINSHLAQTKES.

Substrate contacts are provided by residues 48–50, Arg-88, and Gln-192; that span reads RGA. The active-site Proton donor is Asp-233. 243–244 is a substrate binding site; that stretch reads NK.

The protein belongs to the eIF-2B alpha/beta/delta subunits family. MtnA subfamily.

The enzyme catalyses 5-(methylsulfanyl)-alpha-D-ribose 1-phosphate = 5-(methylsulfanyl)-D-ribulose 1-phosphate. The protein operates within amino-acid biosynthesis; L-methionine biosynthesis via salvage pathway; L-methionine from S-methyl-5-thio-alpha-D-ribose 1-phosphate: step 1/6. Catalyzes the interconversion of methylthioribose-1-phosphate (MTR-1-P) into methylthioribulose-1-phosphate (MTRu-1-P). In Alcanivorax borkumensis (strain ATCC 700651 / DSM 11573 / NCIMB 13689 / SK2), this protein is Methylthioribose-1-phosphate isomerase.